We begin with the raw amino-acid sequence, 204 residues long: Large ribosomal subunit protein uL4 (204 aa).

Residues 53–74 (AYVSGGGKKPWRQKGRGGARAG) are disordered.

It belongs to the universal ribosomal protein uL4 family. In terms of assembly, part of the 50S ribosomal subunit.

In terms of biological role, one of the primary rRNA binding proteins, this protein initially binds near the 5'-end of the 23S rRNA. It is important during the early stages of 50S assembly. It makes multiple contacts with different domains of the 23S rRNA in the assembled 50S subunit and ribosome. Its function is as follows. Forms part of the polypeptide exit tunnel. This Campylobacter curvus (strain 525.92) protein is Large ribosomal subunit protein uL4.